A 274-amino-acid chain; its full sequence is 2,3,4,5-tetrahydropyridine-2,6-dicarboxylate N-succinyltransferase (274 aa).

The protein belongs to the transferase hexapeptide repeat family.

Its subcellular location is the cytoplasm. It catalyses the reaction (S)-2,3,4,5-tetrahydrodipicolinate + succinyl-CoA + H2O = (S)-2-succinylamino-6-oxoheptanedioate + CoA. It participates in amino-acid biosynthesis; L-lysine biosynthesis via DAP pathway; LL-2,6-diaminopimelate from (S)-tetrahydrodipicolinate (succinylase route): step 1/3. The chain is 2,3,4,5-tetrahydropyridine-2,6-dicarboxylate N-succinyltransferase from Leptothrix cholodnii (strain ATCC 51168 / LMG 8142 / SP-6) (Leptothrix discophora (strain SP-6)).